The chain runs to 64 residues: DNA gyrase inhibitor YacG (64 aa).

Residues C7, C10, C26, and C30 each coordinate Zn(2+). Positions 43–64 (KRIPGPINPDLLPYPDEGEQWQ) are disordered.

It belongs to the DNA gyrase inhibitor YacG family. In terms of assembly, interacts with GyrB. Zn(2+) serves as cofactor.

Functionally, inhibits all the catalytic activities of DNA gyrase by preventing its interaction with DNA. Acts by binding directly to the C-terminal domain of GyrB, which probably disrupts DNA binding by the gyrase. The sequence is that of DNA gyrase inhibitor YacG from Aeromonas salmonicida (strain A449).